A 935-amino-acid chain; its full sequence is Auxin response factor 6 (935 aa).

Positions 129–231 form a DNA-binding region, TF-B3; it reads FCKTLTASDT…QLLLGIRRAN (103 aa). Disordered stretches follow at residues 536-624 and 645-714; these read QAYL…PLHT and SAMT…SASD. Composition is skewed to low complexity over residues 546–565 and 573–582; these read QPQS…QQQQ and SASSAAVVSA. Composition is skewed to polar residues over residues 583-624 and 661-689; these read MSQF…PLHT and SSFQ…SNVP. Residues 796 to 880 enclose the PB1 domain; the sequence is NTFVKVYKSG…WCIKILSPQE (85 aa). The segment covering 896–909 has biased composition (polar residues); the sequence is PSSNNVDKLPSNGN. Positions 896–917 are disordered; sequence PSSNNVDKLPSNGNCDDFGNRS.

Belongs to the ARF family. Homodimers and heterodimers. Expressed in the whole plant.

Its subcellular location is the nucleus. In terms of biological role, auxin response factors (ARFs) are transcriptional factors that bind specifically to the DNA sequence 5'-TGTCTC-3' found in the auxin-responsive promoter elements (AuxREs). Seems to act as transcriptional activator. Formation of heterodimers with Aux/IAA proteins may alter their ability to modulate early auxin response genes expression. Regulates both stamen and gynoecium maturation. Promotes jasmonic acid production. Partially redundant with ARF8. This Arabidopsis thaliana (Mouse-ear cress) protein is Auxin response factor 6 (ARF6).